The primary structure comprises 537 residues: CTP synthase (537 aa).

Residues 1–268 form an amidoligase domain region; sequence MSFKCIFLTG…STFITEKLGL (268 aa). S14 serves as a coordination point for CTP. A UTP-binding site is contributed by S14. 15-20 provides a ligand contact to ATP; that stretch reads SLGKGL. Y55 is an L-glutamine binding site. D72 lines the ATP pocket. Mg(2+) is bound by residues D72 and E142. CTP is bound by residues 149–151, 188–193, and K224; these read DIE and KTKPTQ. Residues 188–193 and K224 each bind UTP; that span reads KTKPTQ. The Glutamine amidotransferase type-1 domain occupies 294-533; sequence RLGLVGKYVQ…IEAALLHSRN (240 aa). G353 provides a ligand contact to L-glutamine. The Nucleophile; for glutamine hydrolysis role is filled by C380. L-glutamine-binding positions include 381–384, E404, and R461; that span reads LGMQ. Residues H506 and E508 contribute to the active site.

The protein belongs to the CTP synthase family. In terms of assembly, homotetramer.

It carries out the reaction UTP + L-glutamine + ATP + H2O = CTP + L-glutamate + ADP + phosphate + 2 H(+). The catalysed reaction is L-glutamine + H2O = L-glutamate + NH4(+). It catalyses the reaction UTP + NH4(+) + ATP = CTP + ADP + phosphate + 2 H(+). It participates in pyrimidine metabolism; CTP biosynthesis via de novo pathway; CTP from UDP: step 2/2. With respect to regulation, allosterically activated by GTP, when glutamine is the substrate; GTP has no effect on the reaction when ammonia is the substrate. The allosteric effector GTP functions by stabilizing the protein conformation that binds the tetrahedral intermediate(s) formed during glutamine hydrolysis. Inhibited by the product CTP, via allosteric rather than competitive inhibition. Functionally, catalyzes the ATP-dependent amination of UTP to CTP with either L-glutamine or ammonia as the source of nitrogen. Regulates intracellular CTP levels through interactions with the four ribonucleotide triphosphates. In Chlamydia abortus (strain DSM 27085 / S26/3) (Chlamydophila abortus), this protein is CTP synthase.